The chain runs to 682 residues: Histone deacetylase 18 (682 aa).

Residues 59–382 (KVGLVYDETM…SLACVQVLLE (324 aa)) form a histone deacetylase region. Histidine 191 (proton donor/acceptor) is an active-site residue. Zn(2+)-binding residues include aspartate 231, histidine 233, and aspartate 324. Residues 430 to 608 (SAERNSADAL…DKELQEDRSR (179 aa)) adopt a coiled-coil conformation.

This sequence belongs to the histone deacetylase family. HD type 2 subfamily. Requires Zn(2+) as cofactor. As to expression, expressed in roots, stems, young rosette leaves, flowers and siliques.

It is found in the nucleus. The protein resides in the cytoplasm. It catalyses the reaction N(6)-acetyl-L-lysyl-[histone] + H2O = L-lysyl-[histone] + acetate. Responsible for the deacetylation of lysine residues on the N-terminal part of the core histones (H2A, H2B, H3 and H4). Histone deacetylation gives a tag for epigenetic repression and plays an important role in transcriptional regulation, cell cycle progression and developmental events. Histone deacetylases act via the formation of large multiprotein complexes. Required for appropriate cellular patterning in the root epidermis. Involved in the differentiation of hair and non-hair cells in the root epidermis. Is not directly involved in the regulation of the expression of pattern genes. Regulates the transcription of certain kinase genes, which are components of a positional information relay system, by changing their histone acetylation status. The sequence is that of Histone deacetylase 18 from Arabidopsis thaliana (Mouse-ear cress).